The chain runs to 120 residues: NAD(P)H-quinone oxidoreductase subunit 3 (120 aa).

The next 3 helical transmembrane spans lie at 6–26 (GYEY…LALT), 64–84 (MFAL…PWAV), and 89–109 (LGLL…VALA).

The protein belongs to the complex I subunit 3 family. As to quaternary structure, NDH-1 can be composed of about 15 different subunits; different subcomplexes with different compositions have been identified which probably have different functions.

It localises to the cellular thylakoid membrane. It carries out the reaction a plastoquinone + NADH + (n+1) H(+)(in) = a plastoquinol + NAD(+) + n H(+)(out). The catalysed reaction is a plastoquinone + NADPH + (n+1) H(+)(in) = a plastoquinol + NADP(+) + n H(+)(out). Its function is as follows. NDH-1 shuttles electrons from an unknown electron donor, via FMN and iron-sulfur (Fe-S) centers, to quinones in the respiratory and/or the photosynthetic chain. The immediate electron acceptor for the enzyme in this species is believed to be plastoquinone. Couples the redox reaction to proton translocation, and thus conserves the redox energy in a proton gradient. Cyanobacterial NDH-1 also plays a role in inorganic carbon-concentration. This Prochlorococcus marinus (strain NATL1A) protein is NAD(P)H-quinone oxidoreductase subunit 3.